Consider the following 781-residue polypeptide: Cation channel sperm-associated auxiliary subunit delta (781 aa).

A signal peptide spans 1–20 (MLVLMLVVATTFRLCPLVKA). The Extracellular portion of the chain corresponds to 21–725 (RPLCRIRTLR…YGAFPLSIFP (705 aa)). Intrachain disulfides connect Cys24-Cys370, Cys60-Cys146, Cys145-Cys153, Cys388-Cys497, Cys511-Cys705, Cys526-Cys573, and Cys625-Cys655. N-linked (GlcNAc...) asparagine glycosylation is found at Asn231, Asn294, Asn458, Asn473, Asn539, and Asn631. Residues 726–749 (PEITIVLLTAATLLSIWLAYMIPQ) traverse the membrane as a helical segment. The Cytoplasmic portion of the chain corresponds to 750-781 (LLHTEQGLEGNGFWVRLYQRCRKSCACLWGRC).

The protein belongs to the CATSPERD family. Component of the CatSper complex or CatSpermasome composed of the core pore-forming members CATSPER1, CATSPER2, CATSPER3 and CATSPER4 as well as auxiliary members CATSPERB, CATSPERG, CATSPERD, CATSPERE, CATSPERZ, C2CD6/CATSPERT, TMEM249, TMEM262 and EFCAB9. HSPA1 may be an additional auxiliary complex member. The core complex members CATSPER1, CATSPER2, CATSPER3 and CATSPER4 form a heterotetrameric channel. The auxiliary CATSPERB, CATSPERG, CATSPERD and CATSPERE subunits form a pavilion-like structure over the pore which stabilizes the complex through interactions with CATSPER4, CATSPER3, CATSPER1 and CATSPER2 respectively. TMEM262/CATSPERH interacts with CATSPERB, further stabilizing the complex. C2CD6/CATSPERT interacts at least with CATSPERD and is required for targeting the CatSper complex in the flagellar membrane.

The protein localises to the cell projection. It is found in the cilium. Its subcellular location is the flagellum membrane. Auxiliary component of the CatSper complex, a complex involved in sperm cell hyperactivation. Sperm cell hyperactivation is needed for sperm motility which is essential late in the preparation of sperm for fertilization. Required for CATSPER1 stability before intraflagellar transport and/or incorporation of the CatSper complex channel into the flagellar membrane. This Bos taurus (Bovine) protein is Cation channel sperm-associated auxiliary subunit delta.